The primary structure comprises 224 residues: DeSI-like protein At4g17486 (224 aa).

In terms of domain architecture, PPPDE spans 26 to 163; it reads TPVYLNVYDL…FCNCLLPESI (138 aa). Catalysis depends on residues His51 and Cys125. Residues 176–201 are disordered; sequence EFSDEDESNSEASSVSDEEGSEQHLI.

Belongs to the DeSI family.

In Arabidopsis thaliana (Mouse-ear cress), this protein is DeSI-like protein At4g17486.